We begin with the raw amino-acid sequence, 184 residues long: NADH-quinone oxidoreductase subunit B (184 aa).

The [4Fe-4S] cluster site is built by Cys-63, Cys-64, Cys-128, and Cys-158.

The protein belongs to the complex I 20 kDa subunit family. In terms of assembly, NDH-1 is composed of 14 different subunits. Subunits NuoB, C, D, E, F, and G constitute the peripheral sector of the complex. [4Fe-4S] cluster serves as cofactor.

Its subcellular location is the cell inner membrane. It catalyses the reaction a quinone + NADH + 5 H(+)(in) = a quinol + NAD(+) + 4 H(+)(out). Its function is as follows. NDH-1 shuttles electrons from NADH, via FMN and iron-sulfur (Fe-S) centers, to quinones in the respiratory chain. Couples the redox reaction to proton translocation (for every two electrons transferred, four hydrogen ions are translocated across the cytoplasmic membrane), and thus conserves the redox energy in a proton gradient. In Xanthomonas campestris pv. campestris (strain 8004), this protein is NADH-quinone oxidoreductase subunit B.